A 1419-amino-acid polypeptide reads, in one-letter code: Multidrug resistance protein 1 (1419 aa).

Positions 1–37 (MGKEQKEKKDGNLSIKEEVEKELNKKSTAELFRKIKN) are r domain; regulates transporter activity. Residues 1–60 (MGKEQKEKKDGNLSIKEEVEKELNKKSTAELFRKIKNEKISFFLPFKCLPAQHRKLLFIS) are Cytoplasmic-facing. The region spanning 58–345 (FISFVCAVLS…ILPNITEYMK (288 aa)) is the ABC transmembrane type-1 1 domain. The chain crosses the membrane as a helical span at residues 61–81 (FVCAVLSGGTLPFFISVFGVI). Over 82–90 (LKNMNLGDD) the chain is Vacuolar. Residues 91–111 (INPIILSLVSIGLVQFILSMI) form a helical membrane-spanning segment. Residues 112 to 168 (SSYCMDVITSKILKTLKLEYLRSVFYQDGQFHDNNPGSKLRSDLDFYLEQVSSGIGT) are Cytoplasmic-facing. Residues 169 to 189 (KFITIFTYASSFLGLYIWSLI) form a helical membrane-spanning segment. Topologically, residues 190-191 (KN) are vacuolar. The helical transmembrane segment at 192–212 (ARLTLCITCVFPLIYVCGVIC) threads the bilayer. The Cytoplasmic portion of the chain corresponds to 213-275 (NKKVKLNKKT…KYILKANFVE (63 aa)). A helical transmembrane segment spans residues 276–296 (ALHIGLINGLILVSYAFGFWY). Residues 297-316 (GTRIIINSATNQYPNNDFNG) are Vacuolar-facing. A helical transmembrane segment spans residues 317–337 (ASVISILLGVLISMFMLTIIL). Residues 338–788 (PNITEYMKAL…YKEIFSYKKD (451 aa)) lie on the Cytoplasmic side of the membrane. The region spanning 378 to 662 (IEFKNVRFHY…NNNNNNNNNK (285 aa)) is the ABC transporter 1 domain. ATP-binding residues include Tyr387, Thr389, Arg390, Ser415, Cys417, Gly418, Lys419, Ser420, Thr421, Gln462, Lys562, Ser564, Gly566, and Gln567. Gln462 provides a ligand contact to Mg(2+). Disordered regions lie at residues 639 to 665 (ERSD…KINN) and 697 to 752 (SSNK…TAEN). Low complexity-rich tracts occupy residues 643-665 (NNNN…KINN) and 697-715 (SSNK…NKSS). Over residues 723–749 (GNDADNMNSLSIHENENISNNRNCKNT) the composition is skewed to polar residues. Residues 789–809 (VTIIFFSILVAGGLYPVFALL) form a helical membrane-spanning segment. The ABC transmembrane type-1 2 domain occupies 791-1083 (IIFFSILVAG…GSYAGKLMSL (293 aa)). Residues 810-829 (YARYVSTLFDFANLEYNSNK) are Vacuolar-facing. Residues 830-850 (YSIYILLIAIAMFISETLKNY) form a helical membrane-spanning segment. Residues 851–907 (YNNKIGEKVEKTMKRRLFENILYQEMSFFDQDKNTPGVLSAHINRDVHLLKTGLVNN) lie on the Cytoplasmic side of the membrane. Transmembrane regions (helical) follow at residues 908-928 (IVIF…SFYF) and 929-949 (CPIV…VFAV). Residues 950-1032 (RARLTKSKEI…RIIVNAALWG (83 aa)) are Cytoplasmic-facing. The helical transmembrane segment at 1033–1053 (FSQSAQLFINSFAYWFGSFLI) threads the bilayer. The Vacuolar portion of the chain corresponds to 1054–1057 (KRGT). The chain crosses the membrane as a helical span at residues 1058–1078 (ILVDDFMKSLFTFIFTGSYAG). At 1079–1419 (KLMSLKGDSE…IYKKYVKLAK (341 aa)) the chain is on the cytoplasmic side. The region spanning 1126-1416 (VDIKDVNFRY…QDGIYKKYVK (291 aa)) is the ABC transporter 2 domain. Residues Tyr1135, Arg1138, Thr1163, Gly1164, Gly1166, Lys1167, Ser1168, Thr1169, Gln1256, Leu1312, Ser1313, Gly1315, and Gln1316 each contribute to the ATP site. Ser1168 contacts Mg(2+). Gln1256 contributes to the Mg(2+) binding site.

This sequence belongs to the ABC transporter superfamily. ABCB family. Multidrug resistance exporter (TC 3.A.1.201) subfamily.

The protein resides in the vacuole membrane. The catalysed reaction is ATP + H2O + xenobioticSide 1 = ADP + phosphate + xenobioticSide 2.. Functionally, energy-dependent efflux pump responsible for decreased drug accumulation in multidrug-resistant cells. Transports lumefantrine, mefloquine, chloroquine, quinine, quinidine, amodiaquine, piperaquine, dihydroartemisinin and quinacrine. This Plasmodium falciparum (isolate 3D7) protein is Multidrug resistance protein 1.